The chain runs to 141 residues: 6,7-dimethyl-8-ribityllumazine synthase (141 aa).

5-amino-6-(D-ribitylamino)uracil-binding positions include phenylalanine 13, 45 to 47, and 69 to 71; these read SFE and AII. A (2S)-2-hydroxy-3-oxobutyl phosphate-binding site is contributed by 74–75; the sequence is DT. Histidine 77 acts as the Proton donor in catalysis. Leucine 102 is a binding site for 5-amino-6-(D-ribitylamino)uracil. A (2S)-2-hydroxy-3-oxobutyl phosphate-binding site is contributed by arginine 117.

This sequence belongs to the DMRL synthase family.

The catalysed reaction is (2S)-2-hydroxy-3-oxobutyl phosphate + 5-amino-6-(D-ribitylamino)uracil = 6,7-dimethyl-8-(1-D-ribityl)lumazine + phosphate + 2 H2O + H(+). It functions in the pathway cofactor biosynthesis; riboflavin biosynthesis; riboflavin from 2-hydroxy-3-oxobutyl phosphate and 5-amino-6-(D-ribitylamino)uracil: step 1/2. In terms of biological role, catalyzes the formation of 6,7-dimethyl-8-ribityllumazine by condensation of 5-amino-6-(D-ribitylamino)uracil with 3,4-dihydroxy-2-butanone 4-phosphate. This is the penultimate step in the biosynthesis of riboflavin. This chain is 6,7-dimethyl-8-ribityllumazine synthase, found in Methanopyrus kandleri (strain AV19 / DSM 6324 / JCM 9639 / NBRC 100938).